A 463-amino-acid polypeptide reads, in one-letter code: uncharacterized protein (463 aa).

The next 12 helical transmembrane spans lie at 17–37 (ISLMSLGAAIGVGLFLGSASA), 40–60 (LAGPGILVAYAASGLVMFFIM), 97–117 (WFLWVVTCMAEITAVGIYMGF), 122–142 (VPNWIWALSALVIMTGVNFLA), 153–173 (FALIKIVAILSMIAVGLLMII), 201–221 (GVLLSLQMVMFAYLGIEMIGV), 244–264 (ILIFYVGALFVIMSIYPWQEI), 278–298 (VGIPSAAGIINFVVLTAALSS), 335–355 (AVLASAGALLVGVLLNYVVPA), 357–377 (VFTWVTSIATFGAIWTWAIIL), 401–421 (LFPFTSYVSLAFLAFVVILMA), and 429–449 (AVIIGPIWFLILLAVYYGKGF).

It belongs to the amino acid-polyamine-organocation (APC) superfamily.

The protein resides in the cell membrane. This is an uncharacterized protein from Bacillus subtilis (strain 168).